The primary structure comprises 262 residues: Hydroxyethylthiazole kinase (262 aa).

Met-44 is a binding site for substrate. ATP contacts are provided by Arg-118 and Thr-166. Gly-193 is a substrate binding site.

Belongs to the Thz kinase family. Requires Mg(2+) as cofactor.

It carries out the reaction 5-(2-hydroxyethyl)-4-methylthiazole + ATP = 4-methyl-5-(2-phosphooxyethyl)-thiazole + ADP + H(+). The protein operates within cofactor biosynthesis; thiamine diphosphate biosynthesis; 4-methyl-5-(2-phosphoethyl)-thiazole from 5-(2-hydroxyethyl)-4-methylthiazole: step 1/1. Functionally, catalyzes the phosphorylation of the hydroxyl group of 4-methyl-5-beta-hydroxyethylthiazole (THZ). In Chlamydia felis (strain Fe/C-56) (Chlamydophila felis), this protein is Hydroxyethylthiazole kinase.